The primary structure comprises 862 residues: Ubiquitin carboxyl-terminal hydrolase 13 (862 aa).

The segment at 182–290 (QASKHAKSLV…KHLAHFGIDM (109 aa)) adopts a UBP-type; degenerate zinc-finger fold. Residues Cys-206, Cys-209, Cys-226, and His-239 each coordinate Zn(2+). A USP domain is found at 331-860 (TGMKNLGNSC…LGYIYFYHRI (530 aa)). The Nucleophile role is filled by Cys-340. UBA domains lie at 647 to 688 (DIDE…IIAH) and 722 to 762 (QPPE…IFSH). His-822 functions as the Proton acceptor in the catalytic mechanism.

The protein belongs to the peptidase C19 family.

It catalyses the reaction Thiol-dependent hydrolysis of ester, thioester, amide, peptide and isopeptide bonds formed by the C-terminal Gly of ubiquitin (a 76-residue protein attached to proteins as an intracellular targeting signal).. Its activity is regulated as follows. Specifically inhibited by spautin-1 (specific and potent autophagy inhibitor-1), a derivative of MBCQ that binds to USP13 and inhibits deubiquitinase activity. Functionally, deubiquitinase that mediates deubiquitination of target proteins and is involved in various processes such as autophagy and endoplasmic reticulum-associated degradation (ERAD). In Gallus gallus (Chicken), this protein is Ubiquitin carboxyl-terminal hydrolase 13 (USP13).